The primary structure comprises 406 residues: Argininosuccinate synthase (406 aa).

ATP is bound by residues 13–21 (AYSGGLDTS) and Ala-40. Tyr-91 and Ser-96 together coordinate L-citrulline. Gly-121 provides a ligand contact to ATP. Positions 123, 127, and 128 each coordinate L-aspartate. Asn-127 contributes to the L-citrulline binding site. L-citrulline-binding residues include Arg-131, Ser-182, Ser-191, Glu-267, and Tyr-279.

The protein belongs to the argininosuccinate synthase family. Type 1 subfamily. In terms of assembly, homotetramer.

It localises to the cytoplasm. It catalyses the reaction L-citrulline + L-aspartate + ATP = 2-(N(omega)-L-arginino)succinate + AMP + diphosphate + H(+). The protein operates within amino-acid biosynthesis; L-arginine biosynthesis; L-arginine from L-ornithine and carbamoyl phosphate: step 2/3. This is Argininosuccinate synthase from Brucella suis biovar 1 (strain 1330).